We begin with the raw amino-acid sequence, 321 residues long: MGKVSPKDLDSKTSVRKKKLKSSSNKYLKPGALVQLCYSKASAAKSCNELGKKRVPVFDTKSCNDLGKKRVPVFDIKHARNNKMAVEQLNSPKSPLMLSPVNVVKRSTLVRPMKFDDLQVESNNTCKKSPLMLSPMGIVMQNTLLRTPKTPQADPCVSESQLESLPMDLLVKIVCHLHHDQLKAVFHVSQRIRMATILARQYHFNYTTPDRSRQEMLRVMTPVPINRWPFRRGDGNPTMVSSPHTPKAPKHAPRPPSRTKLAEMKQITAVLFQDQTPFPSRCIVPSVLQRPTLFKPMAPKHPRVLFYEDELCQAVAQNNLT.

Positions 1 to 13 (MGKVSPKDLDSKT) are enriched in basic and acidic residues. A disordered region spans residues 1 to 23 (MGKVSPKDLDSKTSVRKKKLKSS). Positions 159–207 (ESQLESLPMDLLVKIVCHLHHDQLKAVFHVSQRIRMATILARQYHFNYT) constitute an F-box domain. The disordered stretch occupies residues 228 to 258 (WPFRRGDGNPTMVSSPHTPKAPKHAPRPPSR).

The sequence is that of F-box protein At4g35930 from Arabidopsis thaliana (Mouse-ear cress).